The primary structure comprises 248 residues: Probable transcriptional regulatory protein PHZ_c3068 (248 aa).

The protein belongs to the TACO1 family.

The protein localises to the cytoplasm. The sequence is that of Probable transcriptional regulatory protein PHZ_c3068 from Phenylobacterium zucineum (strain HLK1).